Consider the following 508-residue polypeptide: Bifunctional purine biosynthesis protein PurH (508 aa).

An MGS-like domain is found at 1 to 145 (MTKRALISVS…KNHQYVTVIV (145 aa)).

This sequence belongs to the PurH family.

It carries out the reaction (6R)-10-formyltetrahydrofolate + 5-amino-1-(5-phospho-beta-D-ribosyl)imidazole-4-carboxamide = 5-formamido-1-(5-phospho-D-ribosyl)imidazole-4-carboxamide + (6S)-5,6,7,8-tetrahydrofolate. The catalysed reaction is IMP + H2O = 5-formamido-1-(5-phospho-D-ribosyl)imidazole-4-carboxamide. Its pathway is purine metabolism; IMP biosynthesis via de novo pathway; 5-formamido-1-(5-phospho-D-ribosyl)imidazole-4-carboxamide from 5-amino-1-(5-phospho-D-ribosyl)imidazole-4-carboxamide (10-formyl THF route): step 1/1. It participates in purine metabolism; IMP biosynthesis via de novo pathway; IMP from 5-formamido-1-(5-phospho-D-ribosyl)imidazole-4-carboxamide: step 1/1. This Lysinibacillus sphaericus (strain C3-41) protein is Bifunctional purine biosynthesis protein PurH.